We begin with the raw amino-acid sequence, 270 residues long: Phosphonates import ATP-binding protein PhnC 2 (270 aa).

The ABC transporter domain occupies 2–245 (LVVEGLTCRF…IARELYDLEA (244 aa)). 34 to 41 (GRSGAGKS) is a binding site for ATP.

It belongs to the ABC transporter superfamily. Phosphonates importer (TC 3.A.1.9.1) family. As to quaternary structure, the complex is composed of two ATP-binding proteins (PhnC), two transmembrane proteins (PhnE) and a solute-binding protein (PhnD).

It localises to the cell inner membrane. The enzyme catalyses phosphonate(out) + ATP + H2O = phosphonate(in) + ADP + phosphate + H(+). In terms of biological role, part of the ABC transporter complex PhnCDE involved in phosphonates import. Responsible for energy coupling to the transport system. This chain is Phosphonates import ATP-binding protein PhnC 2, found in Rhodopseudomonas palustris (strain BisA53).